The following is a 116-amino-acid chain: Ly-6/neurotoxin-like protein 1 (116 aa).

The N-terminal stretch at 1–20 (MTPLLTLILVVLMGLPLAQA) is a signal peptide. One can recognise a UPAR/Ly6 domain in the interval 21–107 (LDCHVCAYNG…TPATLALAPI (87 aa)). 5 disulfide bridges follow: Cys-23–Cys-46, Cys-26–Cys-33, Cys-39–Cys-64, Cys-68–Cys-85, and Cys-86–Cys-91. Cys-91 is lipidated: GPI-anchor amidated cysteine. Positions 92–116 (NGTGLATPATLALAPILLATLWGLL) are cleaved as a propeptide — removed in mature form.

As to quaternary structure, interacts with nAChRs containing alpha-4:beta-2 (CHRNA4:CHRNB2) and alpha-7 (CHRNA7) subunits. Interacts with CHRNA4 probably in the endoplasmic reticulum prior to nAChR pentameric assembly. Interacts with KCNA2/Potassium voltage-gated channel subfamily A member 2.

It is found in the cell membrane. It localises to the cell projection. Its subcellular location is the dendrite. The protein resides in the endoplasmic reticulum. Functionally, acts in different tissues through interaction to nicotinic acetylcholine receptors (nAChRs). The proposed role as modulator of nAChR activity seems to be dependent on the nAChR subtype and stoichiometry, and to involve an effect on nAChR trafficking and its cell surface expression, and on single channel properties of the nAChR inserted in the plasma membrane. Modulates functional properties of nicotinic acetylcholine receptors (nAChRs) to prevent excessive excitation, and hence neurodegeneration. Enhances desensitization by increasing both the rate and extent of desensitization of alpha-4:beta-2-containing nAChRs and slowing recovery from desensitization. Promotes large amplitude ACh-evoked currents through alpha-4:beta-2 nAChRs. Is involved in regulation of the nAChR pentameric assembly in the endoplasmic reticulum. Shifts stoichiometry from high sensitivity alpha-4(2):beta-2(3) to low sensitivity alpha-4(3):beta-2(2) nAChR. In vitro modulates alpha-3:beta-4-containing nAChRs. Reduces cell surface expression of (alpha-3:beta-4)(2):beta-4 and (alpha-3:beta-4)(2):alpha-5 nAChRs suggesting an interaction with nAChR alpha-3(-):(+)beta-4 subunit interfaces and an allosteric mode. Corresponding single channel effects characterized by decreased unitary conductance, altered burst proportions and enhanced desensitization/inactivation seem to depend on nAChR alpha:alpha subunit interfaces and are greater in (alpha-3:beta-2)(2):alpha-3 when compared to (alpha-3:beta-2)(2):alpha-5 nAChRs. Prevents plasticity in the primary visual cortex late in life. This chain is Ly-6/neurotoxin-like protein 1, found in Homo sapiens (Human).